Reading from the N-terminus, the 639-residue chain is Chaperone protein HtpG (639 aa).

Residues 1–348 are a; substrate-binding; that stretch reads MAQYEFQTEV…SEDLPLNVSR (348 aa). The interval 349-565 is b; it reads EILQQNRVLA…ENDPTVQMER (217 aa). A c region spans residues 566–639; sequence LMRATGQTHK…KRVNRLLARG (74 aa).

Belongs to the heat shock protein 90 family. As to quaternary structure, homodimer.

The protein resides in the cytoplasm. Functionally, molecular chaperone. Has ATPase activity. The polypeptide is Chaperone protein HtpG (Treponema pallidum (strain Nichols)).